We begin with the raw amino-acid sequence, 124 residues long: Bactoprenol-linked glucose translocase (124 aa).

The next 4 helical transmembrane spans lie at 12 to 32 (FFSY…VFYA), 45 to 65 (NIVG…RCSF), 75 to 95 (FIFI…FDLL), and 96 to 116 (ALSP…LGYC).

Belongs to the GtrA family.

The protein localises to the cell membrane. The protein operates within bacterial outer membrane biogenesis; lipopolysaccharide biosynthesis. In terms of biological role, involved in O antigen modification. Involved in the translocation of bactoprenol-linked glucose across the cytoplasmic membrane. This is Bactoprenol-linked glucose translocase (rfbI) from Shigella flexneri.